We begin with the raw amino-acid sequence, 278 residues long: Inner membrane mitoribosome receptor MBA1, mitochondrial (278 aa).

A mitochondrion-targeting transit peptide spans 1 to 33 (MSVLRSTCLFFPPRSLLISFNKRRLFSTSRLIL).

As to quaternary structure, interacts with OXA1 and MDM38. Binds to mitoribosomes in order to recruit them to the mitochondrial inner membrane.

The protein resides in the mitochondrion inner membrane. Functionally, mitochondrial inner membrane-associated mitoribosome receptor that spatially aligns the mitoribosome exit tunnel with the membrane insertion machinery and allows cotranslational protein membrane insertion. This Saccharomyces cerevisiae (strain ATCC 204508 / S288c) (Baker's yeast) protein is Inner membrane mitoribosome receptor MBA1, mitochondrial.